The primary structure comprises 277 residues: Myelin proteolipid protein (277 aa).

Residues 2 to 10 (GLLECCARC) are Cytoplasmic-facing. S-palmitoyl cysteine attachment occurs at residues Cys-6, Cys-7, and Cys-10. A helical membrane pass occupies residues 11-36 (LIGAPFASLVATGLCFFGVALFCGCG). Residues 37–59 (HEALTGTEQLIETYFSKNYQDYE) lie on the Extracellular side of the membrane. A helical transmembrane segment spans residues 60–88 (FLIDVIHGFQYFIYGTAAFFFLYGALLLA). Topologically, residues 89–151 (EGFYTTGAVR…LGKWLGHPDK (63 aa)) are cytoplasmic. Residues Cys-109, Cys-139, and Cys-141 are each lipidated (S-palmitoyl cysteine). Residues 152-178 (FVGITYVLTIIWLLVFACSAVPVYIYF) form a helical membrane-spanning segment. The Extracellular portion of the chain corresponds to 179–238 (NTWTTCQSIGNPTKTSASIGTLCADARMYGILPWNAFPGKVCGSNLLSICKTSEFQMTFH). 2 disulfides stabilise this stretch: Cys-184/Cys-228 and Cys-201/Cys-220. Thr-199 carries O-palmitoyl threonine lipidation. The helical transmembrane segment at 239–268 (LFIAAFVGAAATLVSLVTFIIATTYNFAVL) threads the bilayer. The Cytoplasmic segment spans residues 269 to 277 (RLMGRGTKF).

It belongs to the myelin proteolipid protein family.

The protein resides in the cell membrane. This is the major myelin protein from the central nervous system. It plays an important role in the formation or maintenance of the multilamellar structure of myelin. In Taeniopygia guttata (Zebra finch), this protein is Myelin proteolipid protein (PLP1).